The chain runs to 127 residues: MPQSFTSIARIGDYILKSPVLSKLCVPVANQFINLAGYKKLGLKFDDLIAEENPIMQTALRRLPEDESYARAYRIIRAHQTELTHHLLPRNEWIKAQEDVPYLLPYILEAEAAAKEKDELDNIEVSK.

This sequence belongs to the UQCRB/QCR7 family. As to quaternary structure, component of the ubiquinol-cytochrome c oxidoreductase (cytochrome b-c1 complex, complex III, CIII), a multisubunit enzyme composed of 10 subunits. The complex is composed of 3 respiratory subunits cytochrome b (COB), cytochrome c1 (CYT1) and Rieske protein (RIP1), 2 core protein subunits COR1 and QCR2, and 5 low-molecular weight protein subunits QCR6, QCR7, QCR8, QCR9 and QCR10. The complex exists as an obligatory dimer and forms supercomplexes (SCs) in the inner mitochondrial membrane with a monomer or a dimer of cytochrome c oxidase (complex IV, CIV), resulting in 2 different assemblies (supercomplexes III(2)IV and III(2)IV(2)).

It localises to the mitochondrion inner membrane. Functionally, component of the ubiquinol-cytochrome c oxidoreductase, a multisubunit transmembrane complex that is part of the mitochondrial electron transport chain which drives oxidative phosphorylation. The respiratory chain contains 3 multisubunit complexes succinate dehydrogenase (complex II, CII), ubiquinol-cytochrome c oxidoreductase (cytochrome b-c1 complex, complex III, CIII) and cytochrome c oxidase (complex IV, CIV), that cooperate to transfer electrons derived from NADH and succinate to molecular oxygen, creating an electrochemical gradient over the inner membrane that drives transmembrane transport and the ATP synthase. The cytochrome b-c1 complex catalyzes electron transfer from ubiquinol to cytochrome c, linking this redox reaction to translocation of protons across the mitochondrial inner membrane, with protons being carried across the membrane as hydrogens on the quinol. In the process called Q cycle, 2 protons are consumed from the matrix, 4 protons are released into the intermembrane space and 2 electrons are passed to cytochrome c. In Saccharomyces cerevisiae (strain ATCC 204508 / S288c) (Baker's yeast), this protein is Cytochrome b-c1 complex subunit 7, mitochondrial (QCR7).